Reading from the N-terminus, the 162-residue chain is UPF0114 protein VCM66_0196 (162 aa).

The next 4 helical transmembrane spans lie at 15–35, 53–73, 109–126, and 136–156; these read IMAP…IKFF, LILV…IVMV, VSAS…KVFM, and IKWY…MGYL.

The protein belongs to the UPF0114 family.

It is found in the cell membrane. This chain is UPF0114 protein VCM66_0196, found in Vibrio cholerae serotype O1 (strain M66-2).